The following is a 280-amino-acid chain: tRNA pseudouridine synthase A (280 aa).

Asp55 (nucleophile) is an active-site residue. Substrate is bound at residue Tyr110.

Belongs to the tRNA pseudouridine synthase TruA family.

The catalysed reaction is uridine(38/39/40) in tRNA = pseudouridine(38/39/40) in tRNA. Formation of pseudouridine at positions 38, 39 and 40 in the anticodon stem and loop of transfer RNAs. This Methanosphaerula palustris (strain ATCC BAA-1556 / DSM 19958 / E1-9c) protein is tRNA pseudouridine synthase A.